The primary structure comprises 257 residues: Aspartate/glutamate leucyltransferase (257 aa).

This sequence belongs to the R-transferase family. Bpt subfamily.

The protein localises to the cytoplasm. It carries out the reaction N-terminal L-glutamyl-[protein] + L-leucyl-tRNA(Leu) = N-terminal L-leucyl-L-glutamyl-[protein] + tRNA(Leu) + H(+). The enzyme catalyses N-terminal L-aspartyl-[protein] + L-leucyl-tRNA(Leu) = N-terminal L-leucyl-L-aspartyl-[protein] + tRNA(Leu) + H(+). Its function is as follows. Functions in the N-end rule pathway of protein degradation where it conjugates Leu from its aminoacyl-tRNA to the N-termini of proteins containing an N-terminal aspartate or glutamate. This chain is Aspartate/glutamate leucyltransferase, found in Phenylobacterium zucineum (strain HLK1).